The primary structure comprises 131 residues: Protein FAM107B (131 aa).

Residue alanine 2 is modified to N-acetylalanine. Disordered regions lie at residues 39-78 and 100-131; these read MNQK…KKKS and KLQE…AQES. Lysine 50 carries the N6-acetyllysine modification. The span at 52–78 shows a compositional bias: basic and acidic residues; sequence ELQKVMEKRRRDQVIKQKEEEAQKKKS. Residues 61–112 are a coiled coil; sequence RRDQVIKQKEEEAQKKKSDLEIELLKRQQKLEQLELEKQKLQEEQENAPEFV.

It belongs to the FAM107 family.

This chain is Protein FAM107B, found in Rattus norvegicus (Rat).